A 735-amino-acid polypeptide reads, in one-letter code: Probable pre-mRNA-splicing factor ATP-dependent RNA helicase prp43 (735 aa).

Over residues 1-12 (MEPAQKKLRQES) the composition is skewed to basic and acidic residues. The disordered stretch occupies residues 1 to 34 (MEPAQKKLRQESKNPYLAHLNNGDDSEEVVSSKG). The Helicase ATP-binding domain maps to 85 to 250 (LKIYHENQII…FFDAPLLAVP (166 aa)). ATP is bound at residue 98-105 (GETGSGKT). A DEAH box motif is present at residues 197-200 (DEAH). A Helicase C-terminal domain is found at 275-455 (TVLQIHVEEG…STVLELKKLG (181 aa)).

Belongs to the DEAD box helicase family. DEAH subfamily. DDX15/PRP43 sub-subfamily.

It is found in the nucleus. It catalyses the reaction ATP + H2O = ADP + phosphate + H(+). Pre-mRNA processing factor involved in disassembly of spliceosomes after the release of mature mRNA. This chain is Probable pre-mRNA-splicing factor ATP-dependent RNA helicase prp43 (prp43), found in Schizosaccharomyces pombe (strain 972 / ATCC 24843) (Fission yeast).